Consider the following 99-residue polypeptide: NAD(P)H-quinone oxidoreductase subunit 4L, chloroplastic (99 aa).

A run of 3 helical transmembrane segments spans residues methionine 1 to isoleucine 21, methionine 31 to phenylalanine 51, and isoleucine 59 to alanine 79.

It belongs to the complex I subunit 4L family. NDH is composed of at least 16 different subunits, 5 of which are encoded in the nucleus.

It is found in the plastid. Its subcellular location is the chloroplast thylakoid membrane. It catalyses the reaction a plastoquinone + NADH + (n+1) H(+)(in) = a plastoquinol + NAD(+) + n H(+)(out). The catalysed reaction is a plastoquinone + NADPH + (n+1) H(+)(in) = a plastoquinol + NADP(+) + n H(+)(out). In terms of biological role, NDH shuttles electrons from NAD(P)H:plastoquinone, via FMN and iron-sulfur (Fe-S) centers, to quinones in the photosynthetic chain and possibly in a chloroplast respiratory chain. The immediate electron acceptor for the enzyme in this species is believed to be plastoquinone. Couples the redox reaction to proton translocation, and thus conserves the redox energy in a proton gradient. The polypeptide is NAD(P)H-quinone oxidoreductase subunit 4L, chloroplastic (Adiantum capillus-veneris (Maidenhair fern)).